The following is a 192-amino-acid chain: Peptidyl-tRNA hydrolase (192 aa).

A tRNA-binding site is contributed by Y18. H23 functions as the Proton acceptor in the catalytic mechanism. Residues F69, N71, and N117 each contribute to the tRNA site.

It belongs to the PTH family. Monomer.

It localises to the cytoplasm. The enzyme catalyses an N-acyl-L-alpha-aminoacyl-tRNA + H2O = an N-acyl-L-amino acid + a tRNA + H(+). Functionally, hydrolyzes ribosome-free peptidyl-tRNAs (with 1 or more amino acids incorporated), which drop off the ribosome during protein synthesis, or as a result of ribosome stalling. Catalyzes the release of premature peptidyl moieties from peptidyl-tRNA molecules trapped in stalled 50S ribosomal subunits, and thus maintains levels of free tRNAs and 50S ribosomes. The polypeptide is Peptidyl-tRNA hydrolase (Neisseria meningitidis serogroup C (strain 053442)).